A 2380-amino-acid chain; its full sequence is Probable polyketide synthase 25 (2380 aa).

Residues 1–18 show a composition bias toward polar residues; that stretch reads MDNSYLNNPQFDINNGNK. The segment at 1–29 is disordered; the sequence is MDNSYLNNPQFDINNGNKEVTDDDNNKNN. The region spanning 31–457 is the Ketosynthase family 3 (KS3) domain; the sequence is DNLVAIVGVG…GSNCCLVLSQ (427 aa). Catalysis depends on for beta-ketoacyl synthase activity residues Cys198, His340, and His380. The interval 649–682 is acyl/malonyl transferase; that stretch reads GIKASFMLGHSLGEVTTAYCSGMIDIDQLCYLIY. The active-site For acyl/malonyl transferase activity is Ser659. The N-terminal hotdog fold stretch occupies residues 948–1070; it reads ISILGNSMQD…ANFQLYNNGK (123 aa). In terms of domain architecture, PKS/mFAS DH spans 948–1234; sequence ISILGNSMQD…CTSLTPVKDP (287 aa). Residue His982 is the Proton acceptor; for dehydratase activity of the active site. The C-terminal hotdog fold stretch occupies residues 1085–1234; that stretch reads NLSSIPWDKF…CTSLTPVKDP (150 aa). Asp1148 acts as the Proton donor; for dehydratase activity in catalysis. One can recognise a Carrier domain in the interval 2299-2376; sequence KNSTNIKDKF…MVCQIINDNF (78 aa). Residue Ser2336 is modified to O-(pantetheine 4'-phosphoryl)serine.

Pantetheine 4'-phosphate serves as cofactor.

Its function is as follows. Probable polyketide synthase. The chain is Probable polyketide synthase 25 (pks25) from Dictyostelium discoideum (Social amoeba).